We begin with the raw amino-acid sequence, 437 residues long: 23S rRNA (uracil(1939)-C(5))-methyltransferase RlmD (437 aa).

Residues 10–68 enclose the TRAM domain; sequence SAPRNTTFVAEILDLDYQGRGVAKVQGKTWFIENALPQEKVEVRIVDEKRHYGHGISCK. 4 residues coordinate [4Fe-4S] cluster: cysteine 81, cysteine 87, cysteine 90, and cysteine 167. Residues glutamine 270, phenylalanine 299, asparagine 304, glutamate 320, asparagine 347, and aspartate 368 each contribute to the S-adenosyl-L-methionine site. Catalysis depends on cysteine 394, which acts as the Nucleophile.

This sequence belongs to the class I-like SAM-binding methyltransferase superfamily. RNA M5U methyltransferase family. RlmD subfamily.

It catalyses the reaction uridine(1939) in 23S rRNA + S-adenosyl-L-methionine = 5-methyluridine(1939) in 23S rRNA + S-adenosyl-L-homocysteine + H(+). Its function is as follows. Catalyzes the formation of 5-methyl-uridine at position 1939 (m5U1939) in 23S rRNA. The chain is 23S rRNA (uracil(1939)-C(5))-methyltransferase RlmD from Pasteurella multocida (strain Pm70).